Here is a 240-residue protein sequence, read N- to C-terminus: tRNA1(Val) (adenine(37)-N6)-methyltransferase (240 aa).

It belongs to the methyltransferase superfamily. tRNA (adenine-N(6)-)-methyltransferase family.

Its subcellular location is the cytoplasm. It carries out the reaction adenosine(37) in tRNA1(Val) + S-adenosyl-L-methionine = N(6)-methyladenosine(37) in tRNA1(Val) + S-adenosyl-L-homocysteine + H(+). Specifically methylates the adenine in position 37 of tRNA(1)(Val) (anticodon cmo5UAC). The polypeptide is tRNA1(Val) (adenine(37)-N6)-methyltransferase (Vibrio cholerae serotype O1 (strain ATCC 39315 / El Tor Inaba N16961)).